Reading from the N-terminus, the 881-residue chain is Putative leucine-rich repeat receptor-like protein kinase At2g19210 (881 aa).

An N-terminal signal peptide occupies residues 1–25 (MVHYNFLSLIIFACFFAVFVLLVRA). Residues 26–518 (QDQSGFVSID…SDEKTKKNVY (493 aa)) are Extracellular-facing. Residues asparagine 143, asparagine 234, asparagine 295, asparagine 310, asparagine 404, asparagine 419, asparagine 435, asparagine 446, and asparagine 462 are each glycosylated (N-linked (GlcNAc...) asparagine). LRR repeat units lie at residues 438–460 (LLHI…LGNL) and 462–483 (NLTE…KLLE). The helical transmembrane segment at 519 to 539 (IIPLVASVVGVLGLVLAIALF) threads the bilayer. Topologically, residues 540 to 881 (LLYKKRHRRG…FDSGMFPQAR (342 aa)) are cytoplasmic. Residues 576–850 (NNFERVLGQG…HVVAELKESV (275 aa)) form the Protein kinase domain. ATP-binding positions include 582–590 (LGQGGFGKV) and lysine 603. Position 648 is a phosphotyrosine (tyrosine 648). Aspartate 699 serves as the catalytic Proton acceptor. Phosphothreonine occurs at positions 734 and 739. Position 747 is a phosphotyrosine (tyrosine 747). The segment at 851-881 (SRARAGGGSGASSVTDPAMTNFDSGMFPQAR) is disordered.

Belongs to the protein kinase superfamily. Ser/Thr protein kinase family.

Its subcellular location is the cell membrane. It catalyses the reaction L-seryl-[protein] + ATP = O-phospho-L-seryl-[protein] + ADP + H(+). It carries out the reaction L-threonyl-[protein] + ATP = O-phospho-L-threonyl-[protein] + ADP + H(+). This chain is Putative leucine-rich repeat receptor-like protein kinase At2g19210, found in Arabidopsis thaliana (Mouse-ear cress).